The primary structure comprises 2060 residues: Unconventional myosin-X (2060 aa).

Met1 carries the post-translational modification N-acetylmethionine. A Myosin motor domain is found at 63-739; the sequence is EGVDDMASLT…LEQKLEKRRE (677 aa). ATP contacts are provided by residues Asn104, Tyr113, 160–165, and Asn215; that span reads GAGKTE. The actin-binding stretch occupies residues 619–641; it reads LHSLMATLSSSNPFFVRCIKPNT. IQ domains lie at 742–771, 765–794, and 788–817; these read IDRA…GVVT, VLCG…AAIV, and LKKA…EKRE. Positions 814 to 882 are SAH; sequence EKRELEERKR…LTRELEKQRE (69 aa). The stretch at 883 to 933 forms a coiled coil; the sequence is NKQVEEILRLEKEIEDLQRMKEQQELSLTEASLQKLQQLRDEELRRLEDEA. A phosphoserine mark is found at Ser961, Ser964, and Ser967. Disordered stretches follow at residues 971 to 1039 and 1064 to 1088; these read SELA…PYMN and SLHN…PSPD. Residues 991-1005 are compositionally biased toward acidic residues; sequence PEEEVDEGFEADDDA. Over residues 1064–1083 the composition is skewed to polar residues; sequence SLHNSSSGESTYCMPQNNGD. Residue Thr1160 is modified to Phosphothreonine. 2 PH domains span residues 1214–1312 and 1394–1499; these read EALK…QVHS and EFIV…NVTD. Residues 1549–1697 enclose the MyTH4 domain; that stretch reads LPYGDINLNL…PSRDEIEALI (149 aa). Positions 1702–2046 constitute an FERM domain; that stretch reads MTSTVYCHGG…AYISMIVKKR (345 aa).

It belongs to the TRAFAC class myosin-kinesin ATPase superfamily. Myosin family. Monomer, when in an inactive conformation in the cytosol. Homodimer in its active, membrane-bound conformation; antiparallel coiled coil-mediated dimer formation. Interacts with ECPAS. Interacts with DCC and ITGB5; the presence of DCC inhibits ITGB5 binding. Interacts with tubulin; ITGB5 or DCC binding inhibits tubulin binding. Interacts strongly with CALM3 and weakly with CALM, the CALM3 interaction is essential for function in filopodial extension and motility. Interacts with ITGB1, ITGB3 and ITGB5. Interacts with NEO1. Interacts with VASP.

It localises to the cytoplasm. The protein resides in the cytosol. The protein localises to the cell projection. Its subcellular location is the lamellipodium. It is found in the ruffle. It localises to the cytoskeleton. The protein resides in the filopodium tip. The protein localises to the cell cortex. Its subcellular location is the filopodium membrane. It is found in the cell membrane. Myosins are actin-based motor molecules with ATPase activity. Unconventional myosins serve in intracellular movements. MYO10 binds to actin filaments and actin bundles and functions as a plus end-directed motor. Moves with higher velocity and takes larger steps on actin bundles than on single actin filaments. The tail domain binds to membranous compartments containing phosphatidylinositol 3,4,5-trisphosphate or integrins, and mediates cargo transport along actin filaments. Regulates cell shape, cell spreading and cell adhesion. Stimulates the formation and elongation of filopodia. In hippocampal neurons it induces the formation of dendritic filopodia by trafficking the actin-remodeling protein VASP to the tips of filopodia, where it promotes actin elongation. Plays a role in formation of the podosome belt in osteoclasts. In Rattus norvegicus (Rat), this protein is Unconventional myosin-X (Myo10).